The sequence spans 405 residues: Plasma serine protease inhibitor (405 aa).

The first 19 residues, 1–19, serve as a signal peptide directing secretion; it reads MRFFPILCLVLFISHGVAS. Residues 20 to 24 constitute a propeptide, removed in mature form; the sequence is RRHSH. N247 is a glycosylation site (N-linked (GlcNAc...) asparagine).

It belongs to the serpin family. Forms protease inhibiting heterodimers in extracellular body fluids with serine proteases such as activated protein C/coagulation factor V/F5, acrosin/ACR, chymotrypsinogen B/CTRB1, prothrombin/F2, factor Xa/F10, factor XI/F11, kallikrein/KLKB1, tissue kallikrein, trypsin/PRSS1, prostate specific antigen/KLK3, tissue plasminogen activator/PLAT and urinary plasminogen activator/PLAU. Forms membrane-anchored serine proteases inhibiting heterodimers with TMPRSS7 and TMPRSS11E. Interacts with SEMG2. N-glycosylated; glycans consist of a mixture of sialylated bi- (including sialyl-Lewis X epitopes), tri- and tetra-antennary complex-type chains; affects the maximal heparin- and thrombomodulin-enhanced rates of thrombin inhibition. O-glycosylated; further modified with 2 sialic acid residues. Proteolytically cleaved at the N-terminus; inhibits slightly the heparin- and thrombomodulin-enhanced rates of thrombin inhibition. In terms of processing, proteolytically cleaved. Inhibition of proteases is accompanied by formation of a stable enzyme-inhibitor complex and by degradation of the serpin to lower molecular weight derivatives. In terms of tissue distribution, not detected in blood plasma (at protein level). Expressed in testis, epididymis, seminal vesicles, prostate and ovaries.

It is found in the secreted. The protein resides in the extracellular space. Its inhibitory activity is greatly enhanced in the presence of glycosaminoglycans, heparin, thrombomodulin and phospholipids vesicles. Heparin-dependent serine protease inhibitor acting in body fluids and secretions. Inactivates serine proteases by binding irreversibly to their serine activation site. Involved in the regulation of intravascular and extravascular proteolytic activities. Plays hemostatic roles in the blood plasma. Acts as a procoagulant and pro-inflammatory factor by inhibiting the anticoagulant activated protein C factor as well as the generation of activated protein C factor by the thrombin/thrombomodulin complex. Acts as an anticoagulant factor by inhibiting blood coagulation factors like prothrombin, factor XI, factor Xa, plasma kallikrein and fibrinolytic enzymes such as tissue- and urinary-type plasminogen activators. In seminal plasma, inactivates several serine proteases implicated in the reproductive system. Inhibits the serpin acrosin; indirectly protects component of the male genital tract from being degraded by excessive released acrosin. Inhibits tissue- and urinary-type plasminogen activator, prostate-specific antigen and kallikrein activities; has a control on the sperm motility and fertilization. Inhibits the activated protein C-catalyzed degradation of SEMG1 and SEMG2; regulates the degradation of semenogelin during the process of transfer of spermatozoa from the male reproductive tract into the female tract. In urine, inhibits urinary-type plasminogen activator and kallikrein activities. Inactivates membrane-anchored serine proteases activities such as MPRSS7 and TMPRSS11E. Inhibits urinary-type plasminogen activator-dependent tumor cell invasion and metastasis. May also play a non-inhibitory role in seminal plasma and urine as a hydrophobic hormone carrier by its binding to retinoic acid. The polypeptide is Plasma serine protease inhibitor (Serpina5) (Mus musculus (Mouse)).